The sequence spans 442 residues: D-serine dehydratase (442 aa).

Position 118 is an N6-(pyridoxal phosphate)lysine (Lys118).

It belongs to the serine/threonine dehydratase family. DsdA subfamily. In terms of assembly, monomer. Pyridoxal 5'-phosphate is required as a cofactor.

It carries out the reaction D-serine = pyruvate + NH4(+). This Shigella flexneri protein is D-serine dehydratase.